Here is a 692-residue protein sequence, read N- to C-terminus: Glycine--tRNA ligase beta subunit (692 aa).

This sequence belongs to the class-II aminoacyl-tRNA synthetase family. In terms of assembly, tetramer of two alpha and two beta subunits.

It localises to the cytoplasm. The enzyme catalyses tRNA(Gly) + glycine + ATP = glycyl-tRNA(Gly) + AMP + diphosphate. This chain is Glycine--tRNA ligase beta subunit, found in Alteromonas mediterranea (strain DSM 17117 / CIP 110805 / LMG 28347 / Deep ecotype).